A 213-amino-acid polypeptide reads, in one-letter code: GTP-binding protein yptV4 (213 aa).

A GTP-binding site is contributed by 13–21; the sequence is GDTGVGKSC. Residues 35–43 carry the Effector region motif; that stretch reads HDLTIGVEF. GTP contacts are provided by residues 61–65, 119–122, and 149–151; these read DTAGQ, NKCD, and SAR. The tract at residues 194–213 is disordered; the sequence is AGPQAAKPGEGDARKSSSCC. The segment covering 202–213 has biased composition (basic and acidic residues); the sequence is GEGDARKSSSCC. Residues cysteine 212 and cysteine 213 are each lipidated (S-geranylgeranyl cysteine).

This sequence belongs to the small GTPase superfamily. Rab family.

It is found in the cell membrane. Protein transport. Probably involved in vesicular traffic. The sequence is that of GTP-binding protein yptV4 (YPTV4) from Volvox carteri (Green alga).